We begin with the raw amino-acid sequence, 292 residues long: Protein LRATD1 (292 aa).

A Phosphoserine modification is found at S38. Residues 133–228 form the LRAT domain; the sequence is PAPEPPAPAP…CRFGKREFKA (96 aa).

Belongs to the LRATD family. As to expression, only detected in testis. Highly expressed in colon cancer cells.

The protein resides in the cytoplasm. Functionally, may play a role in cell morphology and motility. The polypeptide is Protein LRATD1 (Homo sapiens (Human)).